Consider the following 566-residue polypeptide: Protein OBERON 1 (566 aa).

Over residues 1–10 (MGTSSGSNLP) the composition is skewed to polar residues. The interval 1–79 (MGTSSGSNLP…KTGPDSHDQH (79 aa)) is disordered. Positions 18 to 29 (QQLQTSLSLVSS) are enriched in low complexity. Over residues 47–60 (ESASSQETWPTSKS) the composition is skewed to polar residues. Basic and acidic residues predominate over residues 64–79 (RKTDSGKTGPDSHDQH). The PHD-type zinc-finger motif lies at 225-289 (LCMCVICNKF…LFKCRACNHT (65 aa)). Residues 407–522 (EEKTRMYKKA…LFEKIKEQES (116 aa)) are a coiled coil. Residues 545–566 (YNASSPRVDPRSNQRNPFRSNP) form a disordered region. Over residues 555 to 566 (RSNQRNPFRSNP) the composition is skewed to polar residues.

In terms of assembly, self-interacts. Interacts with OBE2, OBE3 and OBE4. Binds to VPg of pea seed borne mosaic virus (PSbMV), turnip mosaic virus (TuMV) and lettuce mosaic virus (LMV), but not with VPg of tobacco etch virus (TEV), cowpea mosaic virus (CPMV), tomato black ring virus (TBRV) and grapevine fan leaf virus (GFLV). Interacts with RBL. Expressed in roots, seedlings, stems, leaves, flowers and siliques, especially in the vasculature.

Its subcellular location is the nucleus. The protein resides in the nucleoplasm. Probable transcription factor that acts together with OBE2 for the maintenance and/or establishment of both the shoot and root meristems, probably by controlling the expression of the meristem genes such as WUS, PLT1 and PLT2 and of genes required for auxin responses. Promotes cell meristematic activity via the WUSCHEL-CLAVATA pathway. Involved in the development of the basal pole and in auxin-mediated root and vascular development in the embryo. Confers sensitivity to turnip mosaic virus (TuMV) probably by promoting viral movement and multiplication via interaction with TuMV VPg. The chain is Protein OBERON 1 from Arabidopsis thaliana (Mouse-ear cress).